Here is a 61-residue protein sequence, read N- to C-terminus: Myrmicitoxin(1)-Pm5a (61 aa).

The N-terminal stretch at 1-23 (MKAIIFLFAVLTVVAIIIPIISG) is a signal peptide. Positions 24–33 (EPNAGPLAAS) are excised as a propeptide. The residue at position 60 (Gln-60) is a Glutamine amide.

It belongs to the formicidae venom clade 2 family. As to expression, expressed by the venom gland.

The protein localises to the secreted. Toxin that causes a rapid and irreversible paralysis when intrathoracically injected into insects (blowflies). Does not cause spontaneous nocifensive behaviors by intraplantar injection in mice. The sequence is that of Myrmicitoxin(1)-Pm5a from Pogonomyrmex maricopa (Maricopa harvester ant).